A 467-amino-acid polypeptide reads, in one-letter code: SVGFKAGVKEYKLTYYTPXXXAKDTDILAAFXVTPQPGVPPEEAGXXVAAESSTGTWTTVWTDGLTSLDRXKGXCYHIEPVIGEKDQYICYVAYPLDLFEEGSVTNMFTSIVGNVFGFKALRALRLEDLRIPVAYVKTFQGPPHGIQVERDKLNKYGRPLLGCTIKPKLGLSAKNYGRAVYECLRGGLDFTKDDENVNSQPFMRWRDRFLFCAEALYKAQAETGEIKGHYLNATAGTCEEMIKRAVFARELGVPIVMHDYLTGGFTANTSLAHYCRDNGLLLHIHRAMHAVIDRQKNHGMHFRVLRKALRLSGGDHIHSGTVVGKLEGEREITLGFVDLLRDDFIEKDRSRGIYFTQDWVSLPGVIPVASGGIHVWHMPALTEIFGDDSVLQFGGGTLGHPWGNAPGAVANRVALEACVQARNEGRDLAREGNAIIREASKWSPELAAACEVWKEIKFEFAAMDTLD.

Lys5 is subject to N6,N6,N6-trimethyllysine. Positions 114 and 164 each coordinate substrate. The Proton acceptor role is filled by Lys166. Lys168 serves as a coordination point for substrate. Mg(2+)-binding residues include Lys192, Asp194, and Glu195. Lys192 is subject to N6-carboxylysine. Residue His285 is the Proton acceptor of the active site. Arg286, His318, and Ser370 together coordinate substrate.

This sequence belongs to the RuBisCO large chain family. Type I subfamily. As to quaternary structure, heterohexadecamer of 8 large chains and 8 small chains; disulfide-linked. The disulfide link is formed within the large subunit homodimers. The cofactor is Mg(2+). In terms of processing, the disulfide bond which can form in the large chain dimeric partners within the hexadecamer appears to be associated with oxidative stress and protein turnover.

It localises to the plastid. It is found in the chloroplast. The catalysed reaction is 2 (2R)-3-phosphoglycerate + 2 H(+) = D-ribulose 1,5-bisphosphate + CO2 + H2O. It catalyses the reaction D-ribulose 1,5-bisphosphate + O2 = 2-phosphoglycolate + (2R)-3-phosphoglycerate + 2 H(+). Its function is as follows. RuBisCO catalyzes two reactions: the carboxylation of D-ribulose 1,5-bisphosphate, the primary event in carbon dioxide fixation, as well as the oxidative fragmentation of the pentose substrate in the photorespiration process. Both reactions occur simultaneously and in competition at the same active site. This chain is Ribulose bisphosphate carboxylase large chain, found in Scutellaria bolanderi (Sierra skullcap).